Consider the following 493-residue polypeptide: 6-aminohexanoate-cyclic-dimer hydrolase (493 aa).

Residues Lys-72 and Ser-150 each act as charge relay system in the active site. Ser-174 functions as the Acyl-ester intermediate in the catalytic mechanism.

The protein belongs to the amidase family. Homodimer.

It catalyses the reaction 1,8-diazacyclotetradecane-2,9-dione + H2O = N-(6-aminohexanoyl)-6-aminohexanoate. It participates in xenobiotic degradation; nylon-6 oligomer degradation. Its function is as follows. Catalyzes the hydrolysis of 6-aminohexanoic acid cyclic dimer (1,8-diazacyclotetradecane-2,9-dione) to form the linear dimer 6-aminohexanoyl-6-aminohexanoic acid. The polypeptide is 6-aminohexanoate-cyclic-dimer hydrolase (nylA) (Pseudomonas sp. (strain NK87)).